The following is a 357-amino-acid chain: Isoflavone 7-O-methyltransferase (357 aa).

S-adenosyl-L-methionine is bound by residues valine 200–glycine 203, aspartate 224, aspartate 224–arginine 225, aspartate 244–methionine 245, and lysine 258. Histidine 262 (proton acceptor) is an active-site residue.

It belongs to the class I-like SAM-binding methyltransferase superfamily. Cation-independent O-methyltransferase family. COMT subfamily.

It carries out the reaction a 7-hydroxyisoflavone + S-adenosyl-L-methionine = a 7-methoxyisoflavone + S-adenosyl-L-homocysteine + H(+). 7-O-methyltransferase involved in the biosynthesis of isoformononetin. Can use daidzein as substrate, but not medicarpin or 2,7,4'-trihydroxyisoflavanone. This chain is Isoflavone 7-O-methyltransferase (D7OMT), found in Glycyrrhiza echinata (Licorice).